The following is a 375-amino-acid chain: Glucokinase 1 (375 aa).

25-30 (CDVGGS) contacts ATP.

The protein belongs to the bacterial glucokinase family. Monomer. Post-translationally, the N-terminus is blocked.

It carries out the reaction D-glucose + ATP = D-glucose 6-phosphate + ADP + H(+). The polypeptide is Glucokinase 1 (GK1) (Trichomonas vaginalis).